Here is a 444-residue protein sequence, read N- to C-terminus: Protein kinase C and casein kinase substrate in neurons protein 1 (444 aa).

Phosphoserine occurs at positions 2 and 79. The F-BAR domain occupies Glu13–Asp283. A coiled-coil region spans residues Lys26–Ile275. 2 disordered regions span residues Met175–Lys194 and Leu309–Lys386. Thr184 is subject to Phosphothreonine. Positions Thr314–Glu324 are enriched in basic and acidic residues. Polar residues predominate over residues Thr329–Asp351. Phosphoserine is present on residues Ser346, Ser348, Ser349, Ser361, and Ser365. In terms of domain architecture, SH3 spans Ser385–Ile444. A Phosphotyrosine modification is found at Tyr394. Phosphoserine is present on residues Ser405 and Ser430.

Belongs to the PACSIN family. In terms of assembly, may form heterooligomers with other PACSINs. Interacts with MAPT. Interacts with TRPV4. Interacts (via SH3 domain) with SYNJ1 and WASL. Interacts with DNM2 and DNM3. Interacts with both COBL and DBNL. Identified in a complex composed of COBL, PACSIN1 and WASL. Interacts with EHD1 and EHD3. Homodimer. Interacts (via SH3 domain) with DNM1; the interaction is reduced by DNM1 phosphorylation. In terms of processing, phosphorylated by casein kinase 2 (CK2) and protein kinase C (PKC). In terms of tissue distribution, highly expressed in brain and, at much lower levels, in heart and pancreas.

The protein localises to the cytoplasm. It is found in the cell projection. The protein resides in the synapse. It localises to the synaptosome. Its subcellular location is the ruffle membrane. The protein localises to the membrane. It is found in the cytoplasmic vesicle membrane. The protein resides in the cytosol. It localises to the cell membrane. Plays a role in the reorganization of the microtubule cytoskeleton via its interaction with MAPT; this decreases microtubule stability and inhibits MAPT-induced microtubule polymerization. Plays a role in cellular transport processes by recruiting DNM1, DNM2 and DNM3 to membranes. Plays a role in the reorganization of the actin cytoskeleton and in neuron morphogenesis via its interaction with COBL and WASL, and by recruiting COBL to the cell cortex. Plays a role in the regulation of neurite formation, neurite branching and the regulation of neurite length. Required for normal synaptic vesicle endocytosis; this process retrieves previously released neurotransmitters to accommodate multiple cycles of neurotransmission. Required for normal excitatory and inhibitory synaptic transmission. Binds to membranes via its F-BAR domain and mediates membrane tubulation. This Homo sapiens (Human) protein is Protein kinase C and casein kinase substrate in neurons protein 1 (PACSIN1).